The following is a 333-amino-acid chain: Photosystem II assembly lipoprotein Ycf48 (333 aa).

The signal sequence occupies residues 1 to 23 (MNRLLSSAVNLLLVLVLGVGLSG). The N-palmitoyl cysteine moiety is linked to residue cysteine 24. Cysteine 24 carries S-diacylglycerol cysteine lipidation.

The protein belongs to the Ycf48 family. Part of early PSII assembly complexes which includes D1 (psbA) and PsbI; not found in mature PSII. Binds to the lumenal side of PSII complexes. Interacts with YidC.

Its subcellular location is the cellular thylakoid membrane. Its function is as follows. A factor required for optimal assembly of photosystem II (PSII), acting in the early stages of PSII assembly. Also plays a role in replacement of photodamaged D1 (psbA). Assists YidC in synthesis of chlorophyll-binding proteins. This chain is Photosystem II assembly lipoprotein Ycf48, found in Synechococcus sp. (strain CC9902).